A 309-amino-acid chain; its full sequence is Methionyl-tRNA formyltransferase (309 aa).

109–112 is a binding site for (6S)-5,6,7,8-tetrahydrofolate; that stretch reads SLLP.

It belongs to the Fmt family.

The catalysed reaction is L-methionyl-tRNA(fMet) + (6R)-10-formyltetrahydrofolate = N-formyl-L-methionyl-tRNA(fMet) + (6S)-5,6,7,8-tetrahydrofolate + H(+). Functionally, attaches a formyl group to the free amino group of methionyl-tRNA(fMet). The formyl group appears to play a dual role in the initiator identity of N-formylmethionyl-tRNA by promoting its recognition by IF2 and preventing the misappropriation of this tRNA by the elongation apparatus. The chain is Methionyl-tRNA formyltransferase from Chloroflexus aggregans (strain MD-66 / DSM 9485).